Reading from the N-terminus, the 485-residue chain is NADH-quinone oxidoreductase subunit N (485 aa).

A run of 14 helical transmembrane segments spans residues 8 to 28, 35 to 55, 71 to 91, 105 to 125, 127 to 147, 159 to 179, 203 to 223, 235 to 255, 271 to 291, 297 to 317, 326 to 346, 373 to 393, 408 to 430, and 455 to 475; these read LIAL…MLSI, FLNA…LWFV, GFAM…CTFA, FYLL…ANHL, SLFL…GYAF, YTIL…LVYA, LLAG…LVPF, PAPV…GVVM, VVLA…ALSQ, LLGY…IALQ, VGVY…VVSL, AAVM…LGFI, WWLV…RVAV, and IVVL…QPLI.

This sequence belongs to the complex I subunit 2 family. NDH-1 is composed of 13 different subunits. Subunits NuoA, H, J, K, L, M, N constitute the membrane sector of the complex.

The protein resides in the cell inner membrane. The enzyme catalyses a quinone + NADH + 5 H(+)(in) = a quinol + NAD(+) + 4 H(+)(out). Functionally, NDH-1 shuttles electrons from NADH, via FMN and iron-sulfur (Fe-S) centers, to quinones in the respiratory chain. The immediate electron acceptor for the enzyme in this species is believed to be ubiquinone. Couples the redox reaction to proton translocation (for every two electrons transferred, four hydrogen ions are translocated across the cytoplasmic membrane), and thus conserves the redox energy in a proton gradient. The polypeptide is NADH-quinone oxidoreductase subunit N (Escherichia coli O7:K1 (strain IAI39 / ExPEC)).